The sequence spans 505 residues: Putative ribose/galactose/methyl galactoside import ATP-binding protein 1 (505 aa).

2 consecutive ABC transporter domains span residues 10 to 245 (LRLE…VGRS) and 256 to 501 (RPTD…SGYG). 42 to 49 (GENGAGKS) contacts ATP.

Belongs to the ABC transporter superfamily. Carbohydrate importer 2 (CUT2) (TC 3.A.1.2) family.

It localises to the cell inner membrane. It catalyses the reaction D-ribose(out) + ATP + H2O = D-ribose(in) + ADP + phosphate + H(+). It carries out the reaction D-galactose(out) + ATP + H2O = D-galactose(in) + ADP + phosphate + H(+). Functionally, part of an ABC transporter complex involved in carbohydrate import. Could be involved in ribose, galactose and/or methyl galactoside import. Responsible for energy coupling to the transport system. This chain is Putative ribose/galactose/methyl galactoside import ATP-binding protein 1, found in Agrobacterium fabrum (strain C58 / ATCC 33970) (Agrobacterium tumefaciens (strain C58)).